Reading from the N-terminus, the 412-residue chain is CCA-adding enzyme (412 aa).

Residues S41 and K44 each coordinate ATP. Positions 41 and 44 each coordinate CTP. Mg(2+)-binding residues include D53, D55, and D106. The ATP site is built by H129, K149, and Y158. CTP contacts are provided by H129, K149, and Y158.

This sequence belongs to the tRNA nucleotidyltransferase/poly(A) polymerase family. Archaeal CCA-adding enzyme subfamily. As to quaternary structure, homodimer. The cofactor is Mg(2+).

It carries out the reaction a tRNA precursor + 2 CTP + ATP = a tRNA with a 3' CCA end + 3 diphosphate. It catalyses the reaction a tRNA with a 3' CCA end + 2 CTP + ATP = a tRNA with a 3' CCACCA end + 3 diphosphate. In terms of biological role, catalyzes the addition and repair of the essential 3'-terminal CCA sequence in tRNAs without using a nucleic acid template. Adds these three nucleotides in the order of C, C, and A to the tRNA nucleotide-73, using CTP and ATP as substrates and producing inorganic pyrophosphate. tRNA 3'-terminal CCA addition is required both for tRNA processing and repair. Also involved in tRNA surveillance by mediating tandem CCA addition to generate a CCACCA at the 3' terminus of unstable tRNAs. While stable tRNAs receive only 3'-terminal CCA, unstable tRNAs are marked with CCACCA and rapidly degraded. The sequence is that of CCA-adding enzyme from Saccharolobus islandicus (strain Y.N.15.51 / Yellowstone #2) (Sulfolobus islandicus).